The primary structure comprises 181 residues: TATA-box-binding protein (181 aa).

Repeat copies occupy residues 7-83 (VVNV…VKEL) and 98-173 (VQNM…SKTL).

It belongs to the TBP family.

Its function is as follows. General factor that plays a role in the activation of archaeal genes transcribed by RNA polymerase. Binds specifically to the TATA box promoter element which lies close to the position of transcription initiation. In Methanococcus maripaludis (strain DSM 14266 / JCM 13030 / NBRC 101832 / S2 / LL), this protein is TATA-box-binding protein.